Here is a 938-residue protein sequence, read N- to C-terminus: Protein NLP3 (938 aa).

2 disordered regions span residues 1-26 (MEVD…GGGD) and 557-597 (LADD…KAEK). A compositionally biased stretch (gly residues) spans 12–26 (AGEGGGGGIGGGGGD). A compositionally biased stretch (basic and acidic residues) spans 580–597 (SLHKSNKPPERRRGKAEK). The region spanning 585-666 (NKPPERRRGK…IESVQGSDAA (82 aa)) is the RWP-RK domain. The stretch at 640 to 662 (SRKINKVNRSLSKLKQVIESVQG) forms a coiled coil. The tract at residues 743–769 (DKASHSRSSSGEGSINSRTSEASCHGS) is disordered. A compositionally biased stretch (low complexity) spans 748-762 (SRSSSGEGSINSRTS). Residues 847–926 (TVTIKASFKE…HVIRLLVSDV (80 aa)) form the PB1 domain.

Its subcellular location is the nucleus. Its function is as follows. Probable transcription factor. This Oryza sativa subsp. japonica (Rice) protein is Protein NLP3 (NLP3).